Here is a 195-residue protein sequence, read N- to C-terminus: Sec-independent protein translocase protein TatB (195 aa).

The helical transmembrane segment at 1–21 (MFDIGFSELVLIFIVGLVVLG) threads the bilayer. The disordered stretch occupies residues 166–195 (DESQFAAYYPPDDDLASPTPSQPQDKQNVS). Polar residues predominate over residues 183–195 (PTPSQPQDKQNVS).

It belongs to the TatB family. The Tat system comprises two distinct complexes: a TatABC complex, containing multiple copies of TatA, TatB and TatC subunits, and a separate TatA complex, containing only TatA subunits. Substrates initially bind to the TatABC complex, which probably triggers association of the separate TatA complex to form the active translocon.

The protein localises to the cell inner membrane. In terms of biological role, part of the twin-arginine translocation (Tat) system that transports large folded proteins containing a characteristic twin-arginine motif in their signal peptide across membranes. Together with TatC, TatB is part of a receptor directly interacting with Tat signal peptides. TatB may form an oligomeric binding site that transiently accommodates folded Tat precursor proteins before their translocation. In Actinobacillus pleuropneumoniae serotype 5b (strain L20), this protein is Sec-independent protein translocase protein TatB.